Here is a 162-residue protein sequence, read N- to C-terminus: Phosphopantetheine adenylyltransferase (162 aa).

Substrate is bound at residue Thr-10. ATP contacts are provided by residues 10–11 (TF) and His-18. Positions 42, 74, and 88 each coordinate substrate. Residues 89–91 (GLR), Glu-99, and 124–130 (YAFLSSS) each bind ATP.

This sequence belongs to the bacterial CoaD family. As to quaternary structure, homohexamer. Requires Mg(2+) as cofactor.

It is found in the cytoplasm. The catalysed reaction is (R)-4'-phosphopantetheine + ATP + H(+) = 3'-dephospho-CoA + diphosphate. It participates in cofactor biosynthesis; coenzyme A biosynthesis; CoA from (R)-pantothenate: step 4/5. In terms of biological role, reversibly transfers an adenylyl group from ATP to 4'-phosphopantetheine, yielding dephospho-CoA (dPCoA) and pyrophosphate. The chain is Phosphopantetheine adenylyltransferase from Methylococcus capsulatus (strain ATCC 33009 / NCIMB 11132 / Bath).